Here is a 181-residue protein sequence, read N- to C-terminus: 6,7-dimethyl-8-ribityllumazine synthase (181 aa).

5-amino-6-(D-ribitylamino)uracil contacts are provided by residues phenylalanine 24, 62 to 64, and 86 to 88; these read SFE and AII. (2S)-2-hydroxy-3-oxobutyl phosphate is bound at residue 91-92; it reads QT. Histidine 94 acts as the Proton donor in catalysis. A 5-amino-6-(D-ribitylamino)uracil-binding site is contributed by phenylalanine 119. Arginine 133 is a (2S)-2-hydroxy-3-oxobutyl phosphate binding site.

This sequence belongs to the DMRL synthase family.

The catalysed reaction is (2S)-2-hydroxy-3-oxobutyl phosphate + 5-amino-6-(D-ribitylamino)uracil = 6,7-dimethyl-8-(1-D-ribityl)lumazine + phosphate + 2 H2O + H(+). Its pathway is cofactor biosynthesis; riboflavin biosynthesis; riboflavin from 2-hydroxy-3-oxobutyl phosphate and 5-amino-6-(D-ribitylamino)uracil: step 1/2. Its function is as follows. Catalyzes the formation of 6,7-dimethyl-8-ribityllumazine by condensation of 5-amino-6-(D-ribitylamino)uracil with 3,4-dihydroxy-2-butanone 4-phosphate. This is the penultimate step in the biosynthesis of riboflavin. The protein is 6,7-dimethyl-8-ribityllumazine synthase of Microcystis aeruginosa (strain NIES-843 / IAM M-2473).